A 343-amino-acid polypeptide reads, in one-letter code: S-adenosylmethionine:tRNA ribosyltransferase-isomerase (343 aa).

Belongs to the QueA family. In terms of assembly, monomer.

Its subcellular location is the cytoplasm. It catalyses the reaction 7-aminomethyl-7-carbaguanosine(34) in tRNA + S-adenosyl-L-methionine = epoxyqueuosine(34) in tRNA + adenine + L-methionine + 2 H(+). The protein operates within tRNA modification; tRNA-queuosine biosynthesis. In terms of biological role, transfers and isomerizes the ribose moiety from AdoMet to the 7-aminomethyl group of 7-deazaguanine (preQ1-tRNA) to give epoxyqueuosine (oQ-tRNA). This is S-adenosylmethionine:tRNA ribosyltransferase-isomerase from Geobacter metallireducens (strain ATCC 53774 / DSM 7210 / GS-15).